We begin with the raw amino-acid sequence, 308 residues long: Transaldolase (308 aa).

The active-site Schiff-base intermediate with substrate is K125.

It belongs to the transaldolase family. Type 1 subfamily. In terms of assembly, homodimer.

Its subcellular location is the cytoplasm. It catalyses the reaction D-sedoheptulose 7-phosphate + D-glyceraldehyde 3-phosphate = D-erythrose 4-phosphate + beta-D-fructose 6-phosphate. It functions in the pathway carbohydrate degradation; pentose phosphate pathway; D-glyceraldehyde 3-phosphate and beta-D-fructose 6-phosphate from D-ribose 5-phosphate and D-xylulose 5-phosphate (non-oxidative stage): step 2/3. Its function is as follows. Transaldolase is important for the balance of metabolites in the pentose-phosphate pathway. The sequence is that of Transaldolase from Pseudomonas putida (strain GB-1).